The sequence spans 415 residues: Imidazolonepropionase (415 aa).

Fe(3+)-binding residues include H83 and H85. Zn(2+)-binding residues include H83 and H85. 4-imidazolone-5-propanoate contacts are provided by R92, Y155, and H188. N-formimidoyl-L-glutamate is bound at residue Y155. H250 is a binding site for Fe(3+). H250 is a Zn(2+) binding site. Q253 contacts 4-imidazolone-5-propanoate. Residue D324 participates in Fe(3+) binding. D324 serves as a coordination point for Zn(2+). Positions 326 and 328 each coordinate N-formimidoyl-L-glutamate. Residue S329 participates in 4-imidazolone-5-propanoate binding.

Belongs to the metallo-dependent hydrolases superfamily. HutI family. Zn(2+) is required as a cofactor. Requires Fe(3+) as cofactor.

It is found in the cytoplasm. It catalyses the reaction 4-imidazolone-5-propanoate + H2O = N-formimidoyl-L-glutamate. It participates in amino-acid degradation; L-histidine degradation into L-glutamate; N-formimidoyl-L-glutamate from L-histidine: step 3/3. Functionally, catalyzes the hydrolytic cleavage of the carbon-nitrogen bond in imidazolone-5-propanoate to yield N-formimidoyl-L-glutamate. It is the third step in the universal histidine degradation pathway. This chain is Imidazolonepropionase, found in Rubrobacter xylanophilus (strain DSM 9941 / JCM 11954 / NBRC 16129 / PRD-1).